Here is a 312-residue protein sequence, read N- to C-terminus: UDP-N-acetylenolpyruvoylglucosamine reductase (312 aa).

Positions 33 to 199 constitute an FAD-binding PCMH-type domain; it reads RVGGKAEWYC…TGATLQLLPG (167 aa). Residue Arg-178 is part of the active site. Ser-229 functions as the Proton donor in the catalytic mechanism. Glu-299 is an active-site residue.

It belongs to the MurB family. The cofactor is FAD.

Its subcellular location is the cytoplasm. The catalysed reaction is UDP-N-acetyl-alpha-D-muramate + NADP(+) = UDP-N-acetyl-3-O-(1-carboxyvinyl)-alpha-D-glucosamine + NADPH + H(+). It participates in cell wall biogenesis; peptidoglycan biosynthesis. Its function is as follows. Cell wall formation. This is UDP-N-acetylenolpyruvoylglucosamine reductase from Synechococcus sp. (strain JA-3-3Ab) (Cyanobacteria bacterium Yellowstone A-Prime).